The chain runs to 168 residues: Phosphopantetheine adenylyltransferase (168 aa).

Thr-14 contacts substrate. ATP is bound by residues 14 to 15 (TF) and His-22. Residues Lys-46, Leu-78, and Arg-92 each coordinate substrate. ATP-binding positions include 93–95 (GLR), Glu-103, and 128–134 (YSFISSS).

Belongs to the bacterial CoaD family. In terms of assembly, homohexamer. It depends on Mg(2+) as a cofactor.

It is found in the cytoplasm. It carries out the reaction (R)-4'-phosphopantetheine + ATP + H(+) = 3'-dephospho-CoA + diphosphate. It participates in cofactor biosynthesis; coenzyme A biosynthesis; CoA from (R)-pantothenate: step 4/5. Reversibly transfers an adenylyl group from ATP to 4'-phosphopantetheine, yielding dephospho-CoA (dPCoA) and pyrophosphate. The protein is Phosphopantetheine adenylyltransferase of Xanthomonas axonopodis pv. citri (strain 306).